The sequence spans 563 residues: Anaerobic glycerol-3-phosphate dehydrogenase subunit A (563 aa).

20–48 provides a ligand contact to FAD; that stretch reads DVIIIGGGATGAGIARDCALRGIDCILLE.

Belongs to the FAD-dependent glycerol-3-phosphate dehydrogenase family. Composed of a catalytic GlpA/B dimer and of membrane bound GlpC. FAD serves as cofactor. The cofactor is FMN.

Its subcellular location is the cell inner membrane. The enzyme catalyses a quinone + sn-glycerol 3-phosphate = dihydroxyacetone phosphate + a quinol. The protein operates within polyol metabolism; glycerol degradation via glycerol kinase pathway; glycerone phosphate from sn-glycerol 3-phosphate (anaerobic route): step 1/1. The protein is Anaerobic glycerol-3-phosphate dehydrogenase subunit A (glpA) of Haemophilus influenzae (strain ATCC 51907 / DSM 11121 / KW20 / Rd).